The primary structure comprises 458 residues: Histone acetyltransferase KAT8 (458 aa).

The span at methionine 1–threonine 14 shows a compositional bias: low complexity. The disordered stretch occupies residues methionine 1–glutamate 52. Alanine 2 bears the N-acetylalanine mark. Residues serine 37 and serine 42 each carry the phosphoserine modification. A Tudor-knot domain is found at valine 55–alanine 110. Lysine 113 carries the N6-acetyllysine modification. The short motif at arginine 140–isoleucine 149 is the Nuclear localization signal element. Positions threonine 174 to proline 447 constitute an MYST-type HAT domain. Residues threonine 174 to lysine 458 are sufficient for interaction with KANSL1. A C2HC MYST-type zinc finger spans residues leucine 207–tryptophan 232. 4 residues coordinate Zn(2+): cysteine 210, cysteine 213, histidine 226, and cysteine 230. Residue lysine 274 is modified to N6-acetyllysine; by autocatalysis. Acetyl-CoA is bound by residues isoleucine 317, threonine 319, arginine 325, arginine 326, glycine 327, glycine 329, and lysine 330. Serine 348 is subject to Phosphoserine. Glutamate 350 (proton donor/acceptor) is an active-site residue. Residues serine 354, serine 363, tyrosine 408, and lysine 432 each contribute to the acetyl-CoA site.

Belongs to the MYST (SAS/MOZ) family. Component of a multisubunit histone acetyltransferase complex (MSL) at least composed of the MOF/KAT8, MSL1/hampin, MSL2L1 and MSL3L1. Component of the NSL complex at least composed of MOF/KAT8, KANSL1, KANSL2, KANSL3, MCRS1, PHF20, OGT1/OGT, WDR5 and HCFC1. Component of some MLL1/MLL complex, at least composed of the core components KMT2A/MLL1, ASH2L, HCFC1, WDR5 and RBBP5, as well as the facultative components BACC1, CHD8, E2F6, HSP70, INO80C, KANSL1, LAS1L, MAX, MCRS1, MGA, MOF/KAT8, PELP1, PHF20, PRP31, RING2, RUVB1/TIP49A, RUVB2/TIP49B, SENP3, TAF1, TAF4, TAF6, TAF7, TAF9 and TEX10. Interacts with the chromodomain of MORF4L1/MRG15. Interacts with ATM (via its Tudor-knot domain); possibly regulating the activity of ATM. Interacts with NELFD. Post-translationally, acetylation at Lys-274 facilitates cognate substrate Lys-binding and acetylation. Although considered as an autoacetylation event, acetylation at Lys-274 probably takes place via a non-enzymatic process following acetyl-CoA-binding, which primes KAT8 for cognate protein-lysine acetylation. Deacetylated by SIRT1.

The protein localises to the nucleus. The protein resides in the chromosome. It is found in the mitochondrion. The catalysed reaction is L-lysyl-[histone] + acetyl-CoA = N(6)-acetyl-L-lysyl-[histone] + CoA + H(+). The enzyme catalyses L-lysyl-[protein] + acetyl-CoA = N(6)-acetyl-L-lysyl-[protein] + CoA + H(+). It catalyses the reaction propanoyl-CoA + L-lysyl-[protein] = N(6)-propanoyl-L-lysyl-[protein] + CoA + H(+). With respect to regulation, the acetyltransferase activity is inhibited by anacardic acid derivatives. Histone acetyltransferase that catalyzes histone H4 acetylation at 'Lys-5'- and 'Lys-8' (H4K5ac and H4K8ac) or 'Lys-16' (H4K16ac), depending on the context. Catalytic component of the MSL histone acetyltransferase complex, a multiprotein complex that mediates the majority of histone H4 acetylation at 'Lys-16' (H4K16ac), an epigenetic mark that prevents chromatin compaction. H4K16ac constitutes the only acetylation mark intergenerationally transmitted and regulates key biological processes, such as oogenesis, embryonic stem cell pluripotency, hematopoiesis or glucose metabolism. The MSL complex is required for chromosome stability and genome integrity by maintaining homeostatic levels of H4K16ac. The MSL complex is also involved in gene dosage by promoting up-regulation of genes expressed by the X chromosome. X up-regulation is required to compensate for autosomal biallelic expression. The MSL complex also participates in gene dosage compensation by promoting expression of Tsix non-coding RNA. As part of the NSL histone acetyltransferase complex, catalyzes histone H4 acetylation at 'Lys-5'- and 'Lys-8' (H4K5ac and H4K8ac) at transcription start sites and promotes transcription initiation. The NSL complex also acts as a regulator of gene expression in mitochondria: KAT8 associates with mitochondrial DNA and controls expression of respiratory genes in an acetyltransferase-dependent mechanism. Also functions as an acetyltransferase for non-histone targets, such as ALKBH5, COX17, IRF3, KDM1A/LSD1, LMNA, PAX7 or TP53/p53. Acts as an inhibitor of antiviral immunity by acetylating IRF3, preventing IRF3 recruitment to promoters. Acts as a regulator of asymmetric division in muscle stem cells by mediating acetylation of PAX7. As part of the NSL complex, acetylates TP53/p53 at 'Lys-120'. Acts as a regulator of epithelial-to-mesenchymal transition as part of the NSL complex by mediating acetylation of KDM1A/LSD1. The NSL complex is required for nuclear architecture maintenance by mediating acetylation of LMNA. Promotes mitochondrial integrity by catalyzing acetylation of COX17. In addition to protein acetyltransferase activity, able to mediate protein propionylation. In Rattus norvegicus (Rat), this protein is Histone acetyltransferase KAT8 (Kat8).